We begin with the raw amino-acid sequence, 148 residues long: MTRKQRRLYFVLLGMAALGGAVALVLTAISDSLVYFYSPTDIVSQRIPEGRRMRIGGLVENDSVVKDGKTVTFKVTDVTNAVPVVYTGVLPDLFREGQGVVVEGRMEAGGHFKASEVLAKHDENYMPKEVAEALKKSGQWNDGKQPKQ.

Topologically, residues 1 to 7 are cytoplasmic; the sequence is MTRKQRR. The chain crosses the membrane as a helical; Signal-anchor for type II membrane protein span at residues 8 to 28; sequence LYFVLLGMAALGGAVALVLTA. Topologically, residues 29-148 are periplasmic; that stretch reads ISDSLVYFYS…QWNDGKQPKQ (120 aa). 2 residues coordinate heme: His-121 and Tyr-125.

Belongs to the CcmE/CycJ family.

It is found in the cell inner membrane. In terms of biological role, heme chaperone required for the biogenesis of c-type cytochromes. Transiently binds heme delivered by CcmC and transfers the heme to apo-cytochromes in a process facilitated by CcmF and CcmH. This chain is Cytochrome c-type biogenesis protein CcmE, found in Paramagnetospirillum magneticum (strain ATCC 700264 / AMB-1) (Magnetospirillum magneticum).